Here is a 1406-residue protein sequence, read N- to C-terminus: DNA-directed RNA polymerase subunit beta' (1406 aa).

Positions 70, 72, 85, and 88 each coordinate Zn(2+). The Mg(2+) site is built by D460, D462, and D464. Zn(2+) is bound by residues C814, C889, C896, and C899.

The protein belongs to the RNA polymerase beta' chain family. As to quaternary structure, the RNAP catalytic core consists of 2 alpha, 1 beta, 1 beta' and 1 omega subunit. When a sigma factor is associated with the core the holoenzyme is formed, which can initiate transcription. Mg(2+) serves as cofactor. The cofactor is Zn(2+).

It carries out the reaction RNA(n) + a ribonucleoside 5'-triphosphate = RNA(n+1) + diphosphate. DNA-dependent RNA polymerase catalyzes the transcription of DNA into RNA using the four ribonucleoside triphosphates as substrates. This chain is DNA-directed RNA polymerase subunit beta', found in Stenotrophomonas maltophilia (strain K279a).